We begin with the raw amino-acid sequence, 321 residues long: uncharacterized protein (321 aa).

V2 bears the N-acetylvaline mark. Residues 37–63 form a disordered region; the sequence is SEASRLLTPQTSSNHALSKMQKDDDIR. The span at 43-52 shows a compositional bias: polar residues; it reads LTPQTSSNHA. T44 is modified (phosphothreonine). 7 positions are modified to phosphoserine: S49, S69, S121, S126, S129, S137, and S139. Disordered stretches follow at residues 115–270 and 283–321; these read KKQR…YSIS and ETLE…AQPQ. Composition is skewed to polar residues over residues 120–145, 153–162, and 178–189; these read KSIN…TSTD, KYSSSGTPEN, and SYGQMIKNNSNR. Position 159 is a phosphothreonine (T159). Residues 204–229 are compositionally biased toward basic and acidic residues; it reads EIDHTAPEKSEKRQERSGRSFDRQKS. A compositionally biased stretch (polar residues) spans 237–253; that stretch reads LSRSISRGPTKNKTVSP. 4 positions are modified to phosphoserine: S238, S240, S242, and S270. A compositionally biased stretch (acidic residues) spans 284–305; it reads TLEEEQEDAEKEGVLMEDEGNE. Basic and acidic residues predominate over residues 306–315; that stretch reads EYTKDLEEAA.

Its subcellular location is the cytoplasm. This is an uncharacterized protein from Saccharomyces cerevisiae (strain ATCC 204508 / S288c) (Baker's yeast).